Reading from the N-terminus, the 492-residue chain is MKRTVEVNESILRVWFEGCKDVKIMNRKWCADTTTTTILLVYCQHVIDHTKLKQAIAPEMCNDLLQSSFKDSNLLASNSQFSVTTLELENSNENVSRMLFEGKLLIIFQEYKRGYTIDIAKLPTRSIEQSNTEMTIRGSRDGFVEELSTNIGLIRKRLKTSSLSYDEFIIGERTQTKVGLLYLKDVASQETISQVQFKLKEINIDGVVSSAQIEEFITGDQFSLFPLIEYTGRPDYAVNCLLHGRFILLVDGSPTATIAPVSFPFFVNTAEDQNYFYLFGSFVRLLSLFGIAISIFLPGFWVALVTYHPDQIPYTLLATLSLSREGIPFPAPLEGMIMITLFELLRQAGLRIPAAFGQTLSVVGGLIIGQAAISSGFVSPSMVVMIAISVVSTFTLVNQSFTGTLSILRYGVFLMSSFLGIVGFICSILLIVIHVANLRSFGLPFLAPYSPPVFSSMLPSTFRIPFTRMKKRPKELHTYDNTRQRTNNDENK.

7 consecutive transmembrane segments (helical) span residues 246–266 (FILLVDGSPTATIAPVSFPFF), 285–305 (LLSLFGIAISIFLPGFWVALV), 325–345 (EGIPFPAPLEGMIMITLFELL), 353–373 (PAAFGQTLSVVGGLIIGQAAI), 377–397 (FVSPSMVVMIAISVVSTFTLV), 413–433 (FLMSSFLGIVGFICSILLIVI), and 442–462 (GLPFLAPYSPPVFSSMLPSTF).

The protein belongs to the GerABKA family.

It is found in the cell membrane. Its function is as follows. May allow B.anthracis to germinate within phagocytic cells and therefore involved in virulence. In Bacillus anthracis, this protein is Spore germination protein XA (gerXA).